Consider the following 423-residue polypeptide: D-tagatose-1,6-bisphosphate aldolase subunit GatZ (423 aa).

The protein belongs to the GatZ/KbaZ family. GatZ subfamily. Forms a complex with GatY.

The protein operates within carbohydrate metabolism; D-tagatose 6-phosphate degradation; D-glyceraldehyde 3-phosphate and glycerone phosphate from D-tagatose 6-phosphate: step 2/2. Component of the tagatose-1,6-bisphosphate aldolase GatYZ that is required for full activity and stability of the Y subunit. Could have a chaperone-like function for the proper and stable folding of GatY. When expressed alone, GatZ does not show any aldolase activity. Is involved in the catabolism of galactitol. The polypeptide is D-tagatose-1,6-bisphosphate aldolase subunit GatZ (Salmonella paratyphi B (strain ATCC BAA-1250 / SPB7)).